Reading from the N-terminus, the 172-residue chain is Large ribosomal subunit protein uL10 (172 aa).

The protein belongs to the universal ribosomal protein uL10 family. In terms of assembly, part of the ribosomal stalk of the 50S ribosomal subunit. The N-terminus interacts with L11 and the large rRNA to form the base of the stalk. The C-terminus forms an elongated spine to which L12 dimers bind in a sequential fashion forming a multimeric L10(L12)X complex.

Functionally, forms part of the ribosomal stalk, playing a central role in the interaction of the ribosome with GTP-bound translation factors. This chain is Large ribosomal subunit protein uL10, found in Rhizobium etli (strain CIAT 652).